We begin with the raw amino-acid sequence, 90 residues long: MAHTKAGGTTRNSRDSAGRRLGVKATDGQFVNAGSIIYRQRGTKIFPGNNVGRGKDDTLFALISGIVKFEDRINRKFASVYAVEDLKAKK.

Residues 1–21 (MAHTKAGGTTRNSRDSAGRRL) form a disordered region.

It belongs to the bacterial ribosomal protein bL27 family.

This Metamycoplasma arthritidis (strain 158L3-1) (Mycoplasma arthritidis) protein is Large ribosomal subunit protein bL27.